Consider the following 139-residue polypeptide: Hydrogenase maturation factor HypA (139 aa).

Residue histidine 2 coordinates Ni(2+). 4 residues coordinate Zn(2+): cysteine 73, cysteine 76, cysteine 110, and cysteine 113.

It belongs to the HypA/HybF family.

Its function is as follows. Involved in the maturation of [NiFe] hydrogenases. Required for nickel insertion into the metal center of the hydrogenase. The sequence is that of Hydrogenase maturation factor HypA from Pyrococcus abyssi (strain GE5 / Orsay).